The following is a 376-amino-acid chain: Aspartate-semialdehyde dehydrogenase (376 aa).

NADP(+)-binding positions include 11-14, 38-39, and Gln-74; these read RGMV and TS. Residue Arg-103 coordinates phosphate. Cys-136 functions as the Acyl-thioester intermediate in the catalytic mechanism. Position 163 (Gln-163) interacts with substrate. NADP(+)-binding positions include 166-167 and Pro-194; that span reads SG. Glu-242 provides a ligand contact to substrate. A phosphate-binding site is contributed by Lys-245. A substrate-binding site is contributed by Arg-273. The Proton acceptor role is filled by His-280. Residue Gln-356 participates in NADP(+) binding.

This sequence belongs to the aspartate-semialdehyde dehydrogenase family. In terms of assembly, homodimer.

The catalysed reaction is L-aspartate 4-semialdehyde + phosphate + NADP(+) = 4-phospho-L-aspartate + NADPH + H(+). It functions in the pathway amino-acid biosynthesis; L-lysine biosynthesis via DAP pathway; (S)-tetrahydrodipicolinate from L-aspartate: step 2/4. It participates in amino-acid biosynthesis; L-methionine biosynthesis via de novo pathway; L-homoserine from L-aspartate: step 2/3. The protein operates within amino-acid biosynthesis; L-threonine biosynthesis; L-threonine from L-aspartate: step 2/5. Its function is as follows. Catalyzes the NADPH-dependent formation of L-aspartate-semialdehyde (L-ASA) by the reductive dephosphorylation of L-aspartyl-4-phosphate. The polypeptide is Aspartate-semialdehyde dehydrogenase (Bordetella pertussis (strain Tohama I / ATCC BAA-589 / NCTC 13251)).